The primary structure comprises 470 residues: Dynein axonemal assembly factor 11 (470 aa).

4 LRR repeats span residues 20-43 (IFSLEEISLHQQDLERIEYIDKWC), 44-65 (RELKILYLQNNLIGKIENVSKL), 66-89 (KKLEYLNLALNNIEKIENLEGCES), and 90-110 (LQKLDLTVNFVGDLSSINSLQ). The 19-residue stretch at 128 to 146 (YEGYRQYVVATLPQLKWLD) folds into the LRRCT domain. Residues 177–288 (LRKRAAEREK…NRSEEELKKK (112 aa)) adopt a coiled-coil conformation. Positions 182-265 (AEREKATNNL…SQYTPESRLE (84 aa)) are disordered. A compositionally biased stretch (basic and acidic residues) spans 194–213 (KQKEGRKAQEKKPGFDRRWY). Residues 303-395 (VNESKLDFSL…TEMIQTKRAK (93 aa)) enclose the CS domain. The tract at residues 447–470 (HRNSARDTADSEDFIDNAEVPPLV) is disordered.

Belongs to the tilB family.

It is found in the cytoplasm. The protein resides in the cell projection. The protein localises to the cilium. It localises to the dynein axonemal particle. Its subcellular location is the flagellum. Its function is as follows. Involved in dynein arm assembly, is important for expression and transporting outer dynein arm (ODA) proteins from the cytoplasm to the cilia. This chain is Dynein axonemal assembly factor 11 (dnaaf11), found in Xenopus tropicalis (Western clawed frog).